The following is a 348-amino-acid chain: NADH-ubiquinone oxidoreductase chain 2 (348 aa).

A run of 10 helical transmembrane segments spans residues 1–21 (MSPYVTMILISSLGLGTTITF), 25–45 (SWLMAWMGLEINTLAITPLMV), 60–80 (FLTQATASGLLLFATLNNAWM), 93–115 (LSAPMITMALALKMGVAPMHFWL), 149–169 (LNTTTMTILGLTSTIIGGLGG), 177–197 (KVLAYSSIAHLGWMVIIIQYS), 200–220 (LALLNLLLYITMTSTAFLTLM), 239–259 (IATMTAMLALLALGGLPPLTG), 274–294 (NLPALATLMALSALLSLFFYL), and 326–346 (LAMLSIMTLMALPTTPTMVAI).

This sequence belongs to the complex I subunit 2 family.

Its subcellular location is the mitochondrion inner membrane. It catalyses the reaction a ubiquinone + NADH + 5 H(+)(in) = a ubiquinol + NAD(+) + 4 H(+)(out). Core subunit of the mitochondrial membrane respiratory chain NADH dehydrogenase (Complex I) that is believed to belong to the minimal assembly required for catalysis. Complex I functions in the transfer of electrons from NADH to the respiratory chain. The immediate electron acceptor for the enzyme is believed to be ubiquinone. The chain is NADH-ubiquinone oxidoreductase chain 2 (MT-ND2) from Latimeria chalumnae (Coelacanth).